The following is a 248-amino-acid chain: NADP-dependent 3-hydroxy acid dehydrogenase YdfG (248 aa).

Residues 7 to 12 (GATAGF), 32 to 33 (RR), 54 to 55 (DV), and Asn-81 contribute to the NADP(+) site. A substrate-binding site is contributed by Ser-134. NADP(+)-binding positions include Tyr-147, Lys-151, and 177 to 185 (PGLVGGTEF). Tyr-147 serves as the catalytic Proton acceptor.

It belongs to the short-chain dehydrogenases/reductases (SDR) family. As to quaternary structure, homotetramer.

The catalysed reaction is 3-hydroxypropanoate + NADP(+) = 3-oxopropanoate + NADPH + H(+). It carries out the reaction L-allo-threonine + NADP(+) = aminoacetone + CO2 + NADPH. Functionally, NADP-dependent dehydrogenase with broad substrate specificity acting on 3-hydroxy acids. Catalyzes the NADP-dependent oxidation of L-allo-threonine to L-2-amino-3-keto-butyrate, which is spontaneously decarboxylated into aminoacetone. Also acts on D-threonine, L-serine, D-serine, D-3-hydroxyisobutyrate, L-3-hydroxyisobutyrate, D-glycerate and L-glycerate. Able to catalyze the reduction of the malonic semialdehyde to 3-hydroxypropionic acid. YdfG is apparently supplementing RutE, the presumed malonic semialdehyde reductase involved in pyrimidine degradation since both are able to detoxify malonic semialdehyde. The sequence is that of NADP-dependent 3-hydroxy acid dehydrogenase YdfG from Shigella flexneri.